A 562-amino-acid polypeptide reads, in one-letter code: MQFDYIIIGAGSAGNVLATRLTEDPNTTVLLLEAGGPDYRFDFRTQMPAALAFPLQGKRYNWAYETEPEPFMNNRRMECGRGKGLGGSSLINGMCYIRGNALDLDNWAQEPGLENWSYLDCLPYYRKAETRDVGENDYHGGDGPVSVTTSKPGVNPLFEAMIEAGVQAGYPRTDDLNGYQQEGFGPMDRTVTPHGRRASTARGYLDQAKSRPNLTIRTHAMTDHIFFDGKRAVGVEWLEGDSTIPTRAAANKEVLLCAGAIASPQILQRSGVGNAELLAEFDIPLVHELPGVGENLQDHLEMYLQYECKEPVSLYPALQWWNQPKIGAEWLFGGTGVGASNHFEAGGFIRSREEFAWPNIQYHFLPVAINYNGSNAVKEHGFQCHVGSMRSPSRGHVRIKSRDPHQHPAILFNYMSHEQDWQEFRDAIRITREIMHQPALDQYRGREISPGVECQTDEQLDEFVRNHAETAFHPCGTCKMGYDEMAVVDAEGRVHGLEGLRVVDASIMPQIITGNLNATTIMIGEKMADMIRGKDALPRSTARYFVANGMPVRAKKMSRDVN.

An FAD-binding site is contributed by Asp4 to Glu33. The Proton acceptor role is filled by His473.

This sequence belongs to the GMC oxidoreductase family. FAD serves as cofactor.

It catalyses the reaction choline + A = betaine aldehyde + AH2. The catalysed reaction is betaine aldehyde + NAD(+) + H2O = glycine betaine + NADH + 2 H(+). It participates in amine and polyamine biosynthesis; betaine biosynthesis via choline pathway; betaine aldehyde from choline (cytochrome c reductase route): step 1/1. Functionally, involved in the biosynthesis of the osmoprotectant glycine betaine. Catalyzes the oxidation of choline to betaine aldehyde and betaine aldehyde to glycine betaine at the same rate. The protein is Oxygen-dependent choline dehydrogenase of Escherichia coli O45:K1 (strain S88 / ExPEC).